A 347-amino-acid chain; its full sequence is DNA-directed RNA polymerase subunit alpha (347 aa).

Positions 1–243 (MLFREGTRLI…DQISVFINFD (243 aa)) are alpha N-terminal domain (alpha-NTD). An alpha C-terminal domain (alpha-CTD) region spans residues 255-347 (SGSSDLNDNL…EWKRKQHHEA (93 aa)).

This sequence belongs to the RNA polymerase alpha chain family. As to quaternary structure, homodimer. The RNAP catalytic core consists of 2 alpha, 1 beta, 1 beta' and 1 omega subunit. When a sigma factor is associated with the core the holoenzyme is formed, which can initiate transcription.

It carries out the reaction RNA(n) + a ribonucleoside 5'-triphosphate = RNA(n+1) + diphosphate. DNA-dependent RNA polymerase catalyzes the transcription of DNA into RNA using the four ribonucleoside triphosphates as substrates. The sequence is that of DNA-directed RNA polymerase subunit alpha from Lawsonia intracellularis (strain PHE/MN1-00).